Reading from the N-terminus, the 739-residue chain is Vascular cell adhesion protein 1 (739 aa).

An N-terminal signal peptide occupies residues 1 to 24 (MPRKMVVIFGASNILWMVFAVSQA). 7 Ig-like C2-type domains span residues 25–105 (SKME…KKLE), 109–212 (QVEI…KERE), 223–309 (PRNT…LIVQ), 312–399 (PFTV…IKVD), 408–506 (EVEM…QTLY), 511–595 (PRDT…VELI), and 600–684 (PKDI…LTLD). Topologically, residues 25-698 (SKMEIFLEPR…ENNKDYFSPE (674 aa)) are extracellular. Intrachain disulfides connect cysteine 47/cysteine 95, cysteine 52/cysteine 99, cysteine 137/cysteine 195, cysteine 246/cysteine 291, and cysteine 335/cysteine 383. N-linked (GlcNAc...) asparagine glycans are attached at residues asparagine 76 and asparagine 77. N-linked (GlcNAc...) asparagine glycosylation is present at asparagine 273. Asparagine 531 carries an N-linked (GlcNAc...) asparagine glycan. A disulfide bridge links cysteine 534 with cysteine 579. A helical membrane pass occupies residues 699 to 720 (LLVLYCASSLIIPAIGMIIYFA). Over 721-739 (RRANMKGSYSLVEAQKSKV) the chain is Cytoplasmic.

In terms of processing, cleaved by the metalloproteinase ADAM17 to generate the soluble form. Sialoglycoprotein. Post-translationally, ubiquitinated by TRIM65 via 'Lys-48'-linked ubiquitination; leading to proteasomal degradation.

The protein resides in the cell membrane. Its subcellular location is the secreted. In terms of biological role, cell adhesion glycoprotein predominantly expressed on the surface of endothelial cells that plays an important role in immune surveillance and inflammation. Acts as a major regulator of leukocyte adhesion to the endothelium through interaction with different types of integrins. During inflammatory responses, binds ligands on the surface of activated endothelial cells to initiate the activation of calcium channels and the plasma membrane-associated small GTPase RAC1 leading to leukocyte transendothelial migration. Also serves as a quality-control checkpoint for entry into bone marrow by providing a 'don't-eat-me' stamping in the context of major histocompatibility complex (MHC) class-I presentation. The sequence is that of Vascular cell adhesion protein 1 (VCAM1) from Canis lupus familiaris (Dog).